Here is a 376-residue protein sequence, read N- to C-terminus: Decapping nuclease RAI1 (376 aa).

Glutamate 168 serves as a coordination point for a divalent metal cation. 2 residues coordinate substrate: cysteine 200 and glutamate 217. A divalent metal cation-binding residues include aspartate 219, glutamate 237, and leucine 238. Substrate-binding residues include lysine 239 and glutamine 263.

It belongs to the DXO/Dom3Z family. As to quaternary structure, interacts with RAT1; the interaction is direct, stabilizes RAT1 protein structure and stimulates its exoribonuclease activity. The interaction also stimulates RAI1 pyrophosphohydrolase activity, probably by recruiting it to mRNA substrates. A divalent metal cation serves as cofactor.

Its subcellular location is the nucleus. The enzyme catalyses a 5'-end NAD(+)-phospho-ribonucleoside in mRNA + H2O = a 5'-end phospho-ribonucleoside in mRNA + NAD(+) + H(+). It catalyses the reaction a 5'-end (N(7)-methyl 5'-triphosphoguanosine)-ribonucleoside-ribonucleotide in mRNA + H2O = a (N(7)-methyl 5'-triphosphoguanosine)-nucleoside + a 5'-end phospho-ribonucleoside in mRNA + H(+). It carries out the reaction a 5'-end triphospho-ribonucleoside in mRNA + H2O = a 5'-end phospho-ribonucleoside in mRNA + diphosphate + H(+). In terms of biological role, decapping enzyme for NAD-capped RNAs: specifically hydrolyzes the nicotinamide adenine dinucleotide (NAD) cap from a subset of RNAs by removing the entire NAD moiety from the 5'-end of an NAD-capped RNA. The NAD-cap is present at the 5'-end of some RNAs and snoRNAs. In contrast to the canonical 5'-end N7 methylguanosine (m7G) cap, the NAD cap promotes mRNA decay. Also acts as a non-canonical decapping enzyme that removes the entire cap structure of m7G capped or incompletely capped RNAs. Has decapping activity toward incomplete 5'-end m7G cap mRNAs such as unmethylated 5'-end-capped RNA (cap0), while it has no activity toward 2'-O-ribose methylated m7G cap (cap1). Also possesses RNA 5'-pyrophosphohydrolase activity by hydrolyzing the 5'-end triphosphate to release pyrophosphates. Stimulates exoribonuclease activity of Rat1, allowing it to degrade RNAs with stable secondary structure more effectively. This Gibberella zeae (strain ATCC MYA-4620 / CBS 123657 / FGSC 9075 / NRRL 31084 / PH-1) (Wheat head blight fungus) protein is Decapping nuclease RAI1 (RAI1).